The chain runs to 641 residues: Putative phagocytic receptor 1a (641 aa).

A signal peptide spans 1–23 (MKINKKQIVFFILFSIFLNHVNG). Residues 24–279 (IFYLPGMIPH…ESNDNSVHWF (256 aa)) lie on the Extracellular side of the membrane. Residues 280–300 (SILNSLMIVFILTVMVAMIII) traverse the membrane as a helical segment. Residues 301-349 (RTLKKDIRRYTSIDTSEDRDSQEETGWKMIHGDVFRPPSHPMLLSVCIG) lie on the Cytoplasmic side of the membrane. A helical membrane pass occupies residues 350–370 (SGVQIFSMTLITMIFAVLGFL). Over 371-374 (SPAN) the chain is Extracellular. The chain crosses the membrane as a helical span at residues 375-395 (IGGLATALIVLFVLSAMFAGY). At 396 to 413 (FSTRVFTIFKGRNWKKNT) the chain is on the cytoplasmic side. The chain crosses the membrane as a helical span at residues 414–434 (IYTALSMPGIIFGIFFFVNMF). Residues 435–445 (LRGAKSSAAVP) are Extracellular-facing. A helical membrane pass occupies residues 446 to 466 (FGTFASIIAMWFGISVPLVFL). Topologically, residues 467–502 (GSYFASKKPVPEDPVRTNQIPRQVPDQIWYMNPYLS) are cytoplasmic. A helical membrane pass occupies residues 503 to 523 (ILMGGILPFGAVFIELHFILT). The Extracellular portion of the chain corresponds to 524–532 (SLWDNQFYY). A helical transmembrane segment spans residues 533–553 (IFGFLFIVLMILIVTSAEISI). Over 554–578 (VMCYFQLCAEDHHWWWRSFLTAGSS) the chain is Cytoplasmic. A helical transmembrane segment spans residues 579–599 (SLYMFIYSVSFFRYLGITKFI). The Extracellular segment spans residues 600–608 (SSLLDFSYS). The chain crosses the membrane as a helical span at residues 609-629 (FIMSLAFAALTGTIGFYSCYF). Over 630 to 641 (LVRKIYSSIHIN) the chain is Cytoplasmic.

This sequence belongs to the nonaspanin (TM9SF) (TC 9.A.2) family.

It is found in the membrane. Involved in adhesion, phagocytosis of hydrophilic particles and intracellular killing of bacteria. Associates with proteins harboring glycine-rich transmembrane domains and ensures their efficient localization to the cell surface. In Dictyostelium discoideum (Social amoeba), this protein is Putative phagocytic receptor 1a (phg1a).